Reading from the N-terminus, the 212-residue chain is Glutathione S-transferase (212 aa).

A GST N-terminal domain is found at 1–82 (MGMKLHGPAM…YIAHTYADKG (82 aa)). Glutathione is bound by residues Ser-11, 12–13 (PA), 40–41 (HK), 53–54 (QV), and 66–67 (ES). The 124-residue stretch at 89 to 212 (DPKKMAIMSV…AWSKAIEYKQ (124 aa)) folds into the GST C-terminal domain.

It belongs to the GST superfamily. Phi family.

The catalysed reaction is RX + glutathione = an S-substituted glutathione + a halide anion + H(+). Its function is as follows. Conjugation of reduced glutathione to a wide number of exogenous and endogenous hydrophobic electrophiles. This chain is Glutathione S-transferase, found in Hyoscyamus muticus (Egyptian henbane).